A 60-amino-acid polypeptide reads, in one-letter code: Large ribosomal subunit protein bL32 (60 aa).

Disordered stretches follow at residues 1 to 22 (MAVQ…HNAL) and 34 to 60 (GETH…KSEA). Residues 9–19 (SPSKRGMHRSH) show a composition bias toward basic residues.

It belongs to the bacterial ribosomal protein bL32 family.

This chain is Large ribosomal subunit protein bL32, found in Variovorax paradoxus (strain S110).